The chain runs to 363 residues: Inositol-3-phosphate synthase (363 aa).

6 residues coordinate NAD(+): Asp68, Ala127, Tyr147, Ser190, Asp225, and Lys238.

It belongs to the myo-inositol 1-phosphate synthase family. Monomer. NAD(+) serves as cofactor.

It catalyses the reaction D-glucose 6-phosphate = 1D-myo-inositol 3-phosphate. It participates in polyol metabolism; myo-inositol biosynthesis; myo-inositol from D-glucose 6-phosphate: step 1/2. In terms of biological role, key enzyme in myo-inositol biosynthesis pathway that catalyzes the conversion of glucose 6-phosphate to 1D-myo-inositol 3-phosphate in a NAD-dependent manner. Plays a key role in oxidative stress resistance as its product is the precursor of the protective antioxidant mycothiol (MSH or AcCys-GlcN-Ins). The sequence is that of Inositol-3-phosphate synthase from Corynebacterium glutamicum (strain ATCC 13032 / DSM 20300 / JCM 1318 / BCRC 11384 / CCUG 27702 / LMG 3730 / NBRC 12168 / NCIMB 10025 / NRRL B-2784 / 534).